The chain runs to 371 residues: Geranylgeranyl pyrophosphate synthase paxG (371 aa).

Residues Lys-89, Arg-92, and His-121 each contribute to the isopentenyl diphosphate site. Asp-128 and Asp-132 together coordinate Mg(2+). Residue Arg-137 participates in dimethylallyl diphosphate binding. Arg-138 lines the isopentenyl diphosphate pocket. Positions 215, 216, and 249 each coordinate dimethylallyl diphosphate. Position 252 (Asp-252) interacts with Mg(2+). Positions 256, 266, and 276 each coordinate dimethylallyl diphosphate. Residues 369–371 carry the Peroxisomal targeting signal motif; that stretch reads GRV.

Belongs to the FPP/GGPP synthase family. The cofactor is Mg(2+).

The protein resides in the peroxisome. The catalysed reaction is isopentenyl diphosphate + dimethylallyl diphosphate = (2E)-geranyl diphosphate + diphosphate. The enzyme catalyses isopentenyl diphosphate + (2E)-geranyl diphosphate = (2E,6E)-farnesyl diphosphate + diphosphate. It carries out the reaction isopentenyl diphosphate + (2E,6E)-farnesyl diphosphate = (2E,6E,10E)-geranylgeranyl diphosphate + diphosphate. It participates in secondary metabolite biosynthesis. In terms of biological role, geranylgeranyl pyrophosphate synthase; part of the gene cluster that mediates the biosynthesis of paxilline, a mycotoxin that acts as an inhibitor of mammalian maxi-K channels. PaxG, the geranylgeranyl diphosphate (GGPP) synthase is proposed to catalyze the first step in paxilline biosynthesis. Condensation of indole-3-glycerol phosphate with GGPP by paxC then forms 3-geranylgeranylindole (3-GGI), followed by epoxidation and cyclization of this intermediate (by paxM and paxB) to form paspaline. Paspaline is subsequently converted to 13-desoxypaxilline by paxP, the latter being then converted to paxilline by paxQ. Finally paxilline can be mono- and di-prenylated by paxD. In Penicillium paxilli, this protein is Geranylgeranyl pyrophosphate synthase paxG.